A 630-amino-acid polypeptide reads, in one-letter code: UvrABC system protein C (630 aa).

In terms of domain architecture, GIY-YIG spans 18–97 (TQSGVYLMKN…IKKHRPKYNI (80 aa)). The 36-residue stretch at 207–242 (KKVIKSMTEKMMGAADEEKFEVAARLRDSIEAIKAI) folds into the UVR domain.

It belongs to the UvrC family. In terms of assembly, interacts with UvrB in an incision complex.

Its subcellular location is the cytoplasm. Functionally, the UvrABC repair system catalyzes the recognition and processing of DNA lesions. UvrC both incises the 5' and 3' sides of the lesion. The N-terminal half is responsible for the 3' incision and the C-terminal half is responsible for the 5' incision. This is UvrABC system protein C from Bdellovibrio bacteriovorus (strain ATCC 15356 / DSM 50701 / NCIMB 9529 / HD100).